A 432-amino-acid chain; its full sequence is Trigger factor (432 aa).

The 86-residue stretch at 161-246 folds into the PPIase FKBP-type domain; sequence EDRVTIDFTG…LKKVEERELP (86 aa).

This sequence belongs to the FKBP-type PPIase family. Tig subfamily. Homodimer and monomer. In vivo most of the ribosomes are in complex with monomeric TF. Uncomplexed TF, however, is in a monomer-dimer equilibrium with approximately two thirds of TF existing in a dimeric state.

The protein resides in the cytoplasm. The enzyme catalyses [protein]-peptidylproline (omega=180) = [protein]-peptidylproline (omega=0). In terms of biological role, involved in protein export. Acts as a chaperone by maintaining the newly synthesized protein in an open conformation. Functions as a peptidyl-prolyl cis-trans isomerase. In Escherichia coli O139:H28 (strain E24377A / ETEC), this protein is Trigger factor.